Consider the following 395-residue polypeptide: Succinate--CoA ligase [ADP-forming] subunit beta (395 aa).

One can recognise an ATP-grasp domain in the interval 9-240 (RDVFEKHGVP…AASADPLEAK (232 aa)). Residues lysine 49, 56 to 58 (GRG), alanine 98, and glutamate 103 contribute to the ATP site. The Mg(2+) site is built by asparagine 195 and aspartate 209. Substrate-binding positions include asparagine 260 and 322-324 (GIT).

It belongs to the succinate/malate CoA ligase beta subunit family. Heterotetramer of two alpha and two beta subunits. The cofactor is Mg(2+).

The catalysed reaction is succinate + ATP + CoA = succinyl-CoA + ADP + phosphate. It catalyses the reaction GTP + succinate + CoA = succinyl-CoA + GDP + phosphate. The protein operates within carbohydrate metabolism; tricarboxylic acid cycle; succinate from succinyl-CoA (ligase route): step 1/1. Succinyl-CoA synthetase functions in the citric acid cycle (TCA), coupling the hydrolysis of succinyl-CoA to the synthesis of either ATP or GTP and thus represents the only step of substrate-level phosphorylation in the TCA. The beta subunit provides nucleotide specificity of the enzyme and binds the substrate succinate, while the binding sites for coenzyme A and phosphate are found in the alpha subunit. In Beutenbergia cavernae (strain ATCC BAA-8 / DSM 12333 / CCUG 43141 / JCM 11478 / NBRC 16432 / NCIMB 13614 / HKI 0122), this protein is Succinate--CoA ligase [ADP-forming] subunit beta.